The following is a 313-amino-acid chain: D-apiose import binding protein (313 aa).

The N-terminal stretch at methionine 1–serine 26 is a signal peptide. Residues asparagine 39, aspartate 115–arginine 116, aspartate 162–asparagine 164, arginine 168, asparagine 218, aspartate 243, and glutamine 263 each bind D-apiofuranose.

The protein belongs to the bacterial solute-binding protein 2 family.

It localises to the periplasm. Part of an ABC transporter complex involved in D-apiose import. The chain is D-apiose import binding protein from Rhizobium rhizogenes (strain K84 / ATCC BAA-868) (Agrobacterium radiobacter).